Reading from the N-terminus, the 319-residue chain is 4-diphosphocytidyl-2-C-methyl-D-erythritol kinase (319 aa).

Lysine 21 is an active-site residue. 106-116 is an ATP binding site; it reads PIGAGLAGGSS. The active site involves aspartate 148.

This sequence belongs to the GHMP kinase family. IspE subfamily.

The enzyme catalyses 4-CDP-2-C-methyl-D-erythritol + ATP = 4-CDP-2-C-methyl-D-erythritol 2-phosphate + ADP + H(+). It functions in the pathway isoprenoid biosynthesis; isopentenyl diphosphate biosynthesis via DXP pathway; isopentenyl diphosphate from 1-deoxy-D-xylulose 5-phosphate: step 3/6. In terms of biological role, catalyzes the phosphorylation of the position 2 hydroxy group of 4-diphosphocytidyl-2C-methyl-D-erythritol. The polypeptide is 4-diphosphocytidyl-2-C-methyl-D-erythritol kinase (Prochlorococcus marinus (strain SARG / CCMP1375 / SS120)).